The primary structure comprises 98 residues: NADH-ubiquinone oxidoreductase chain 4L (98 aa).

Transmembrane regions (helical) follow at residues 1 to 21, 26 to 46, and 59 to 79; these read MTPIQFTFSSAFLLGLSGLAF, LLSALLCLEGMMLSLFIALSL, and APMLLLAFSACEASVGLALMV.

It belongs to the complex I subunit 4L family.

It localises to the mitochondrion membrane. The enzyme catalyses a ubiquinone + NADH + 5 H(+)(in) = a ubiquinol + NAD(+) + 4 H(+)(out). Its function is as follows. Core subunit of the mitochondrial membrane respiratory chain NADH dehydrogenase (Complex I) which catalyzes electron transfer from NADH through the respiratory chain, using ubiquinone as an electron acceptor. Part of the enzyme membrane arm which is embedded in the lipid bilayer and involved in proton translocation. The polypeptide is NADH-ubiquinone oxidoreductase chain 4L (MT-ND4L) (Tetraodon nigroviridis (Spotted green pufferfish)).